The primary structure comprises 311 residues: Urease accessory protein UreD (311 aa).

This sequence belongs to the UreD family. UreD, UreF and UreG form a complex that acts as a GTP-hydrolysis-dependent molecular chaperone, activating the urease apoprotein by helping to assemble the nickel containing metallocenter of UreC. The UreE protein probably delivers the nickel.

It is found in the cytoplasm. Its function is as follows. Required for maturation of urease via the functional incorporation of the urease nickel metallocenter. The chain is Urease accessory protein UreD from Parasynechococcus marenigrum (strain WH8102).